The chain runs to 156 residues: Arginine repressor (156 aa).

This sequence belongs to the ArgR family.

It is found in the cytoplasm. It participates in amino-acid biosynthesis; L-arginine biosynthesis [regulation]. In terms of biological role, regulates arginine biosynthesis genes. This is Arginine repressor from Vibrio vulnificus (strain CMCP6).